The sequence spans 167 residues: Phospholipase A2 imperatoxin-1 (167 aa).

3 residues coordinate Ca(2+): Trp38, Gly40, and Gly42. Cystine bridges form between Cys39-Cys61, Cys60-Cys99, Cys67-Cys92, Cys90-Cys127, and Cys132-Cys144. The active site involves His64. Residue Asp65 coordinates Ca(2+). The N-linked (GlcNAc...) asparagine glycan is linked to Asn102. The propeptide occupies 136–140 (RRLAR).

This sequence belongs to the phospholipase A2 family. Group III subfamily. As to quaternary structure, heterodimer composed of a large subunit and a small subunit; disulfide-linked. Ca(2+) is required as a cofactor. Expressed by the venom gland.

It localises to the secreted. It catalyses the reaction a 1,2-diacyl-sn-glycero-3-phosphocholine + H2O = a 1-acyl-sn-glycero-3-phosphocholine + a fatty acid + H(+). Its function is as follows. Phospholipase toxin, which may catalyze the calcium-dependent hydrolysis of the 2-acyl groups in 3-sn-phosphoglycerides. Inhibits both skeletal (RYR1) and cardiac (RYR2) ryanodine receptors (calcium release channels). Probably blocks ryanodine receptors by generating a lipid product. The polypeptide is Phospholipase A2 imperatoxin-1 (Pandinus imperator (Emperor scorpion)).